Reading from the N-terminus, the 469-residue chain is Trigger factor (469 aa).

Residues 165 to 250 (GDCVTIDYLG…VKAISKPDEL (86 aa)) enclose the PPIase FKBP-type domain. The span at 439 to 460 (EYDESDLTEKKPEKKKGVEKTP) shows a compositional bias: basic and acidic residues. The segment at 439–469 (EYDESDLTEKKPEKKKGVEKTPIRKKAPKKG) is disordered.

It belongs to the FKBP-type PPIase family. Tig subfamily.

The protein resides in the cytoplasm. The catalysed reaction is [protein]-peptidylproline (omega=180) = [protein]-peptidylproline (omega=0). Functionally, involved in protein export. Acts as a chaperone by maintaining the newly synthesized protein in an open conformation. Functions as a peptidyl-prolyl cis-trans isomerase. This Bartonella quintana (strain Toulouse) (Rochalimaea quintana) protein is Trigger factor.